Here is a 505-residue protein sequence, read N- to C-terminus: L-carnitine/gamma-butyrobetaine antiporter (505 aa).

12 consecutive transmembrane segments (helical) span residues 10-30 (IEPK…WLTV), 50-70 (IWGW…FWLV), 92-112 (IFMM…SIEI), 143-163 (GPLP…FFFV), 195-215 (FYLV…TPLV), 231-251 (LDAI…ACGL), 263-283 (SYLS…SFIM), 316-336 (WTVF…IFLA), 347-367 (LCFG…TVLG), 403-423 (FSTA…VTLI), 446-466 (LLVR…LLAL), and 475-495 (AIIA…LSFI).

It belongs to the BCCT transporter (TC 2.A.15) family. CaiT subfamily. In terms of assembly, homotrimer.

The protein localises to the cell inner membrane. It carries out the reaction 4-(trimethylamino)butanoate(in) + (R)-carnitine(out) = 4-(trimethylamino)butanoate(out) + (R)-carnitine(in). Its pathway is amine and polyamine metabolism; carnitine metabolism. Functionally, catalyzes the exchange of L-carnitine for gamma-butyrobetaine. The protein is L-carnitine/gamma-butyrobetaine antiporter of Citrobacter koseri (strain ATCC BAA-895 / CDC 4225-83 / SGSC4696).